Reading from the N-terminus, the 325-residue chain is Ribose-phosphate pyrophosphokinase 4 (325 aa).

Positions 145 and 147 each coordinate Mg(2+). The interval 228–243 is binding of phosphoribosylpyrophosphate; it reads GRHVVIVDDLVQSGGT.

Belongs to the ribose-phosphate pyrophosphokinase family. Requires Mg(2+) as cofactor.

The enzyme catalyses D-ribose 5-phosphate + ATP = 5-phospho-alpha-D-ribose 1-diphosphate + AMP + H(+). This Oryza sativa subsp. japonica (Rice) protein is Ribose-phosphate pyrophosphokinase 4.